Consider the following 427-residue polypeptide: C4-dicarboxylate transport protein (427 aa).

Helical transmembrane passes span 5–25 (IFSS…FLGH), 44–64 (LIKM…IAGM), 76–96 (IALL…LCVV), 142–162 (IGAF…LFGF), 184–206 (VIFG…AMAF), 222–242 (LIAC…GSIA), 307–327 (IYLT…LDLF), 330–350 (ITLL…TGSG), and 352–372 (IVLA…LALI).

This sequence belongs to the dicarboxylate/amino acid:cation symporter (DAACS) (TC 2.A.23) family.

It localises to the cell inner membrane. In terms of biological role, responsible for the transport of dicarboxylates such as succinate, fumarate, and malate from the periplasm across the membrane. The polypeptide is C4-dicarboxylate transport protein (Aeromonas salmonicida (strain A449)).